Consider the following 269-residue polypeptide: Enoyl-[acyl-carrier-protein] reductase [NADH] (269 aa).

Residues 20-21 (SI), 64-65 (DV), and 95-96 (IG) each bind NAD(+). Tyrosine 158 is a binding site for substrate. 2 residues coordinate NAD(+): lysine 165 and isoleucine 194.

It belongs to the short-chain dehydrogenases/reductases (SDR) family. FabI subfamily. As to quaternary structure, homodimer. Homotetramer.

It carries out the reaction a 2,3-saturated acyl-[ACP] + NAD(+) = a (2E)-enoyl-[ACP] + NADH + H(+). The catalysed reaction is a 2,3-saturated acyl-CoA + NAD(+) = a (2E)-enoyl-CoA + NADH + H(+). Its pathway is lipid metabolism; mycolic acid biosynthesis. In terms of biological role, enoyl-ACP reductase of the type II fatty acid syntase (FAS-II) system, which is involved in the biosynthesis of mycolic acids, a major component of mycobacterial cell walls. Catalyzes the NADH-dependent reduction of the double bond of 2-trans-enoyl-[acyl-carrier protein], an essential step in the fatty acid elongation cycle of the FAS-II pathway. Shows preference for long-chain fatty acyl thioester substrates, and can also use 2-trans-enoyl-CoAs as alternative substrates. The mycobacterial FAS-II system utilizes the products of the FAS-I system as primers to extend fatty acyl chain lengths up to C56, forming the meromycolate chain that serves as the precursor for final mycolic acids. Its function is as follows. Is the primary target of the first-line antitubercular drug isoniazid (INH) and of the second-line drug ethionamide (ETH). Overexpressed inhA confers INH and ETH resistance to M.bovis. The mechanism of isoniazid action against InhA is covalent attachment of the activated form of the drug to the nicotinamide ring of NAD and binding of the INH-NAD adduct to the active site of InhA. Similarly, the ETH-NAD adduct binds InhA. The sequence is that of Enoyl-[acyl-carrier-protein] reductase [NADH] from Mycobacterium bovis (strain ATCC BAA-935 / AF2122/97).